Here is a 228-residue protein sequence, read N- to C-terminus: L-ribulose-5-phosphate 4-epimerase UlaF (228 aa).

Substrate is bound by residues 26–27, 43–44, and 72–73; these read GN, SG, and SS. Residues D74, H93, and H95 each contribute to the Zn(2+) site. Catalysis depends on D118, which acts as the Proton donor/acceptor. H167 lines the Zn(2+) pocket. Residue Y225 is the Proton donor/acceptor of the active site.

The protein belongs to the aldolase class II family. AraD/FucA subfamily. Zn(2+) is required as a cofactor.

It catalyses the reaction L-ribulose 5-phosphate = D-xylulose 5-phosphate. Its pathway is cofactor degradation; L-ascorbate degradation; D-xylulose 5-phosphate from L-ascorbate: step 4/4. Catalyzes the isomerization of L-ribulose 5-phosphate to D-xylulose 5-phosphate. Is involved in the anaerobic L-ascorbate utilization. In Escherichia coli O45:K1 (strain S88 / ExPEC), this protein is L-ribulose-5-phosphate 4-epimerase UlaF.